A 165-amino-acid polypeptide reads, in one-letter code: 2-C-methyl-D-erythritol 2,4-cyclodiphosphate synthase (165 aa).

Positions 11 and 13 each coordinate a divalent metal cation. 4-CDP-2-C-methyl-D-erythritol 2-phosphate contacts are provided by residues 11–13 (DVH) and 40–41 (HS). His-48 is an a divalent metal cation binding site. 4-CDP-2-C-methyl-D-erythritol 2-phosphate-binding positions include 62–64 (DIG), 67–71 (FPDTD), 137–140 (TTSE), Phe-144, and Arg-147.

The protein belongs to the IspF family. As to quaternary structure, homotrimer. The cofactor is a divalent metal cation.

The catalysed reaction is 4-CDP-2-C-methyl-D-erythritol 2-phosphate = 2-C-methyl-D-erythritol 2,4-cyclic diphosphate + CMP. It functions in the pathway isoprenoid biosynthesis; isopentenyl diphosphate biosynthesis via DXP pathway; isopentenyl diphosphate from 1-deoxy-D-xylulose 5-phosphate: step 4/6. Functionally, involved in the biosynthesis of isopentenyl diphosphate (IPP) and dimethylallyl diphosphate (DMAPP), two major building blocks of isoprenoid compounds. Catalyzes the conversion of 4-diphosphocytidyl-2-C-methyl-D-erythritol 2-phosphate (CDP-ME2P) to 2-C-methyl-D-erythritol 2,4-cyclodiphosphate (ME-CPP) with a corresponding release of cytidine 5-monophosphate (CMP). The polypeptide is 2-C-methyl-D-erythritol 2,4-cyclodiphosphate synthase (Rubrobacter xylanophilus (strain DSM 9941 / JCM 11954 / NBRC 16129 / PRD-1)).